Consider the following 44-residue polypeptide: Small ribosomal subunit protein eS31 (44 aa).

Zn(2+) is bound by residues C18, C21, C35, and C38. A C4-type zinc finger spans residues 18–38; the sequence is CPRCGDTVLAEHEDRQHCGKC.

Belongs to the eukaryotic ribosomal protein eS31 family. As to quaternary structure, part of the 30S ribosomal subunit. Zn(2+) serves as cofactor.

The chain is Small ribosomal subunit protein eS31 from Haloarcula marismortui (strain ATCC 43049 / DSM 3752 / JCM 8966 / VKM B-1809) (Halobacterium marismortui).